The sequence spans 610 residues: Elongation factor 4 (610 aa).

The region spanning Q11–T193 is the tr-type G domain. GTP-binding positions include D23–T28 and N140–D143.

Belongs to the TRAFAC class translation factor GTPase superfamily. Classic translation factor GTPase family. LepA subfamily.

The protein localises to the cell membrane. The enzyme catalyses GTP + H2O = GDP + phosphate + H(+). Required for accurate and efficient protein synthesis under certain stress conditions. May act as a fidelity factor of the translation reaction, by catalyzing a one-codon backward translocation of tRNAs on improperly translocated ribosomes. Back-translocation proceeds from a post-translocation (POST) complex to a pre-translocation (PRE) complex, thus giving elongation factor G a second chance to translocate the tRNAs correctly. Binds to ribosomes in a GTP-dependent manner. The sequence is that of Elongation factor 4 from Limosilactobacillus fermentum (strain NBRC 3956 / LMG 18251) (Lactobacillus fermentum).